An 85-amino-acid chain; its full sequence is Large ribosomal subunit protein bL27 (85 aa).

A disordered region spans residues 1 to 21; the sequence is MAHKKAGGSTRNGRDSNAQRL. The span at 9 to 19 shows a compositional bias: polar residues; that stretch reads STRNGRDSNAQ.

This sequence belongs to the bacterial ribosomal protein bL27 family.

The chain is Large ribosomal subunit protein bL27 from Pectobacterium atrosepticum (strain SCRI 1043 / ATCC BAA-672) (Erwinia carotovora subsp. atroseptica).